A 329-amino-acid chain; its full sequence is Phenylalanine--tRNA ligase alpha subunit (329 aa).

The protein belongs to the class-II aminoacyl-tRNA synthetase family. Phe-tRNA synthetase alpha subunit type 1 subfamily. As to quaternary structure, tetramer of two alpha and two beta subunits. It depends on Mg(2+) as a cofactor.

It localises to the cytoplasm. The catalysed reaction is tRNA(Phe) + L-phenylalanine + ATP = L-phenylalanyl-tRNA(Phe) + AMP + diphosphate + H(+). The sequence is that of Phenylalanine--tRNA ligase alpha subunit (pheS) from Buchnera aphidicola subsp. Schizaphis graminum (strain Sg).